The following is a 162-amino-acid chain: Ribosome maturation factor RimP (162 aa).

This sequence belongs to the RimP family.

The protein localises to the cytoplasm. Functionally, required for maturation of 30S ribosomal subunits. The protein is Ribosome maturation factor RimP of Cupriavidus metallidurans (strain ATCC 43123 / DSM 2839 / NBRC 102507 / CH34) (Ralstonia metallidurans).